The primary structure comprises 83 residues: Gas vesicle protein G (83 aa).

Belongs to the gas vesicle GvpG family. As to quaternary structure, gvpF to GvpM interact with each other in vitro, and may form multi-subunit complex(es).

Its subcellular location is the gas vesicle. Functionally, proteins GvpF to GvpM might be involved in nucleating gas vesicle formation. A minor component of the gas vesicle. Gas vesicles are hollow, gas filled proteinaceous nanostructures found in some microorganisms. They allow positioning of halobacteria at the optimal depth for growth in the poorly aerated, shallow brine pools of their habitat. Expression of a 9.5 kb mc-vac DNA fragment containing 2 divergently transcribed regions (gvpD-gvpE-gvpF-gvpG-gvpH-gvpI-gvpJ-gvpK-gvpL-gvpM and gvpA-gvpC-gvpN-gvpO) allows H.volcanii to produce gas vesicles. The chain is Gas vesicle protein G from Haloferax mediterranei (strain ATCC 33500 / DSM 1411 / JCM 8866 / NBRC 14739 / NCIMB 2177 / R-4) (Halobacterium mediterranei).